Here is a 1007-residue protein sequence, read N- to C-terminus: Probable beta-galactosidase A (1007 aa).

A signal peptide spans 1–18; sequence MKLSSACAIALLAAQAAG. Y96, N140, A141, and E142 together coordinate substrate. The N-linked (GlcNAc...) asparagine glycan is linked to N156. A substrate-binding site is contributed by N199. Residue E200 is the Proton donor of the active site. An intrachain disulfide couples C205 to C206. Y260 provides a ligand contact to substrate. A disulfide bridge connects residues C266 and C315. E298 acts as the Nucleophile in catalysis. Y364 is a binding site for substrate. 10 N-linked (GlcNAc...) asparagine glycosylation sites follow: N373, N402, N422, N478, N522, N622, N739, N760, N777, and N805. Positions 862 to 881 are disordered; it reads RQGFHQPEPPSQDWKSSSPL. A glycan (N-linked (GlcNAc...) asparagine) is linked at N914.

It belongs to the glycosyl hydrolase 35 family.

Its subcellular location is the secreted. It carries out the reaction Hydrolysis of terminal non-reducing beta-D-galactose residues in beta-D-galactosides.. Cleaves beta-linked terminal galactosyl residues from gangliosides, glycoproteins, and glycosaminoglycans. This is Probable beta-galactosidase A (lacA) from Aspergillus phoenicis (Aspergillus saitoi).